We begin with the raw amino-acid sequence, 204 residues long: Recombination protein RecR (204 aa).

The C4-type zinc-finger motif lies at 58-75; it reads CSVCQNITDVGVDPCALC. Residues 83-181 form the Toprim domain; sequence SVICVVESPV…HVTKIARGIP (99 aa).

Belongs to the RecR family.

Its function is as follows. May play a role in DNA repair. It seems to be involved in an RecBC-independent recombinational process of DNA repair. It may act with RecF and RecO. The sequence is that of Recombination protein RecR from Pelodictyon phaeoclathratiforme (strain DSM 5477 / BU-1).